Consider the following 144-residue polypeptide: Maximins 2/H8 type 2 (144 aa).

The N-terminal stretch at M1 to A18 is a signal peptide. Residues R19–R43 constitute a propeptide that is removed on maturation. At N70 the chain carries Asparagine amide. Residues T74 to R123 constitute a propeptide that is removed on maturation. Position 143 is an isoleucine amide (I143).

This sequence belongs to the bombinin family. In terms of tissue distribution, expressed by the skin glands.

It is found in the secreted. Maximin-2 shows antibacterial activity against both Gram-positive and Gram-negative bacteria. It also shows antimicrobial activity against the fungus C.albicans, but not against A.flavus nor P.uticale. It has little hemolytic activity. Its function is as follows. Maximin-H8 shows antimicrobial activity against bacteria and against the fungus C.albicans. Shows strong hemolytic activity. This is Maximins 2/H8 type 2 from Bombina maxima (Giant fire-bellied toad).